We begin with the raw amino-acid sequence, 508 residues long: Light-independent protochlorophyllide reductase subunit B (508 aa).

Residue Asp36 coordinates [4Fe-4S] cluster. Asp294 serves as the catalytic Proton donor. Residue 429–430 (GM) coordinates substrate.

Belongs to the ChlB/BchB/BchZ family. In terms of assembly, protochlorophyllide reductase is composed of three subunits; ChlL, ChlN and ChlB. Forms a heterotetramer of two ChlB and two ChlN subunits. [4Fe-4S] cluster serves as cofactor.

The enzyme catalyses chlorophyllide a + oxidized 2[4Fe-4S]-[ferredoxin] + 2 ADP + 2 phosphate = protochlorophyllide a + reduced 2[4Fe-4S]-[ferredoxin] + 2 ATP + 2 H2O. It functions in the pathway porphyrin-containing compound metabolism; chlorophyll biosynthesis (light-independent). Functionally, component of the dark-operative protochlorophyllide reductase (DPOR) that uses Mg-ATP and reduced ferredoxin to reduce ring D of protochlorophyllide (Pchlide) to form chlorophyllide a (Chlide). This reaction is light-independent. The NB-protein (ChlN-ChlB) is the catalytic component of the complex. The chain is Light-independent protochlorophyllide reductase subunit B from Acaryochloris marina (strain MBIC 11017).